A 407-amino-acid polypeptide reads, in one-letter code: MSYPDDYSTDIEKNKMDLKEFKEKTQIAELESKVLRLELKNKDINRENVQIKKENEILKRELDKLRIPPLILGTILDKVNERKAVVKSSTGPNFLVNLSQFVDPEDIVPGARVCLNQQTLAIVEVLPKEKDYRAMAMEIEEKPDISFEDIGGLNNQIRDIKEVVELPLKNPELFEKVGIVPPKGVLLYGPPGTGKTLLAKAVAYETNASFVRVVGSELVKKFIGEGAKLVRDVFKLAKEKSPCIIFIDEIDAVASKRTESLTGGDREVQRTLMQLLAEMDGFDSRGDVKIIAATNRPDILDPAILRPGRFDRIIEISMPDEDGRLEILKIHTEKMNLKGVDLREVAKIAENMVGADLKAVCTEAGMFAIREEREFIKMDDFREAISKITGKKEKCSYDMPQLTVMYG.

Positions 22–67 (KEKTQIAELESKVLRLELKNKDINRENVQIKKENEILKRELDKLRI) form a coiled coil. ATP contacts are provided by residues 192 to 197 (GTGKTL) and His331. The docks into pockets in the proteasome alpha-ring to cause gate opening stretch occupies residues 405–407 (MYG).

Belongs to the AAA ATPase family. As to quaternary structure, homohexamer. The hexameric complex has a two-ring architecture resembling a top hat that caps the 20S proteasome core at one or both ends. Upon ATP-binding, the C-terminus of PAN interacts with the alpha-rings of the proteasome core by binding to the intersubunit pockets.

Its subcellular location is the cytoplasm. Functionally, ATPase which is responsible for recognizing, binding, unfolding and translocation of substrate proteins into the archaeal 20S proteasome core particle. Is essential for opening the gate of the 20S proteasome via an interaction with its C-terminus, thereby allowing substrate entry and access to the site of proteolysis. Thus, the C-termini of the proteasomal ATPase function like a 'key in a lock' to induce gate opening and therefore regulate proteolysis. Unfolding activity requires energy from ATP hydrolysis, whereas ATP binding alone promotes ATPase-20S proteasome association which triggers gate opening, and supports translocation of unfolded substrates. This Methanococcus maripaludis (strain DSM 14266 / JCM 13030 / NBRC 101832 / S2 / LL) protein is Proteasome-activating nucleotidase.